The following is an 85-amino-acid chain: MQMAYWVMVMMMVGITAPLSEGRKLNDAIRGLVPNDLTPQLLQSLVSRRHRVFHLDNTYLKIPICAWKVCPPTPWRRRDLKKRNK.

The signal sequence occupies residues 1 to 22 (MQMAYWVMVMMMVGITAPLSEG). Residues 23–61 (RKLNDAIRGLVPNDLTPQLLQSLVSRRHRVFHLDNTYLK) constitute a propeptide that is removed on maturation. A disulfide bond links C65 and C70. The propeptide occupies 76-85 (RRRDLKKRNK).

Belongs to the conotoxin C superfamily. Expressed by the venom duct.

The protein resides in the secreted. Its function is as follows. Acts as an agonist of neurotensin receptors. It binds to human neurotensin type 1 receptor (NTSR1), rat neurotensin types 1 and 2 receptors (NTSR1/NTSR2) and mouse neurotensin type 3 receptor (SORT1). This Conus litteratus (Lettered cone) protein is Contulakin-Lt2.